A 259-amino-acid chain; its full sequence is Putative hydro-lyase Rxyl_2409 (259 aa).

Residues 1–24 (MGAPGAAEARERIRRGEHAGPTAG) are disordered. Residues 8-18 (EARERIRRGEH) show a composition bias toward basic and acidic residues.

Belongs to the D-glutamate cyclase family.

This Rubrobacter xylanophilus (strain DSM 9941 / JCM 11954 / NBRC 16129 / PRD-1) protein is Putative hydro-lyase Rxyl_2409.